The sequence spans 453 residues: UDP-glycosyltransferase 76E9 (453 aa).

UDP-alpha-D-glucose contacts are provided by residues Ser-279, 337–339 (APQ), 354–362 (HCGWNSTLE), and 376–379 (TTDQ).

This sequence belongs to the UDP-glycosyltransferase family.

This chain is UDP-glycosyltransferase 76E9 (UGT76E9), found in Arabidopsis thaliana (Mouse-ear cress).